The chain runs to 185 residues: Large ribosomal subunit protein uL30 (185 aa).

This sequence belongs to the universal ribosomal protein uL30 family. Part of the 50S ribosomal subunit.

In Caldivirga maquilingensis (strain ATCC 700844 / DSM 13496 / JCM 10307 / IC-167), this protein is Large ribosomal subunit protein uL30.